Reading from the N-terminus, the 341-residue chain is Glycerol-3-phosphate dehydrogenase [NAD(P)+] (341 aa).

NADPH is bound by residues serine 14, phenylalanine 15, arginine 35, and lysine 108. The sn-glycerol 3-phosphate site is built by lysine 108 and glycine 136. An NADPH-binding site is contributed by alanine 140. Lysine 191, aspartate 244, serine 254, arginine 255, and asparagine 256 together coordinate sn-glycerol 3-phosphate. The active-site Proton acceptor is the lysine 191. Arginine 255 contributes to the NADPH binding site. Residues valine 279 and glutamate 281 each coordinate NADPH.

It belongs to the NAD-dependent glycerol-3-phosphate dehydrogenase family.

It localises to the cytoplasm. It catalyses the reaction sn-glycerol 3-phosphate + NAD(+) = dihydroxyacetone phosphate + NADH + H(+). It carries out the reaction sn-glycerol 3-phosphate + NADP(+) = dihydroxyacetone phosphate + NADPH + H(+). The protein operates within membrane lipid metabolism; glycerophospholipid metabolism. Catalyzes the reduction of the glycolytic intermediate dihydroxyacetone phosphate (DHAP) to sn-glycerol 3-phosphate (G3P), the key precursor for phospholipid synthesis. This chain is Glycerol-3-phosphate dehydrogenase [NAD(P)+], found in Pseudomonas syringae pv. tomato (strain ATCC BAA-871 / DC3000).